A 100-amino-acid chain; its full sequence is MPFWVEVRINNLDEGDISALENNFTQNFNNLIDQNKEIIKYIIQKVKTQSYLEGKLHPFYYINLIDTNDLHKPCFLTKFGLKSRFTREEKGYIVIEGHYH.

This is Protein alpha-2 from Bos taurus (Bovine).